We begin with the raw amino-acid sequence, 1730 residues long: Myosin-7 (1730 aa).

Positions 8-56 (TVGSHVWVEDPDDAWIDGEVEEVNSEEITVNCSGKTVVAKLNNVYPKDP) constitute a Myosin N-terminal SH3-like domain. The Myosin motor domain maps to 61–731 (LGVDDMTKLA…QMAEMDAHRA (671 aa)). Residues 155 to 162 (GESGAGKT) and 208 to 216 (NNNSSRFGK) each bind ATP. Actin-binding regions lie at residues 494–528 (LIEK…YQTF), 530–553 (NHKR…AGDV), 588–612 (FPPL…KQQL), and 612–634 (LQSL…KPNN). IQ domains follow at residues 757–786 (LQAA…EAAS), 782–811 (REAA…SACS), 831–850 (RRAT…HQRY), and 853–882 (TKKA…AAKE). A coiled-coil region spans residues 883-1224 (TGALQDAKTK…VSDMETAEQI (342 aa)). The Dilute domain occupies 1327 to 1678 (DRIVPVFGSA…ISNLKLLLTN (352 aa)). Disordered stretches follow at residues 1367-1387 (QSST…FGRM) and 1456-1520 (DSSV…SSEE). The segment covering 1456–1465 (DSSVVNSPSK) has biased composition (low complexity). The span at 1475 to 1508 (SSEENSPKKSSEENSPKESSGDKSPQKLSDDNSP) shows a compositional bias: basic and acidic residues.

The protein belongs to the TRAFAC class myosin-kinesin ATPase superfamily. Myosin family. Plant myosin class XI subfamily. Homodimer.

Functionally, myosin heavy chain that is required for the cell cycle-regulated transport of various organelles and proteins for their segregation. Functions by binding with its tail domain to receptor proteins on organelles and exerting force with its N-terminal motor domain against actin filaments, thereby transporting its cargo along polarized actin cables. The polypeptide is Myosin-7 (XI-A) (Arabidopsis thaliana (Mouse-ear cress)).